An 862-amino-acid chain; its full sequence is FAS1 domain-containing protein YLR001C (862 aa).

Positions 1 to 23 are cleaved as a signal peptide; sequence MNMAIQTIKYIFWLLPILGLTQA. Over 24–762 the chain is Vacuolar; that stretch reads LLQNPGDDFP…KYHLRLPGIA (739 aa). Residues 34 to 162 form the FAS1 1 domain; the sequence is FSTVIDILSE…ASLQGINNLL (129 aa). Residues asparagine 68, asparagine 112, asparagine 152, asparagine 200, asparagine 291, asparagine 333, asparagine 450, asparagine 521, asparagine 542, asparagine 569, asparagine 663, asparagine 679, and asparagine 688 are each glycosylated (N-linked (GlcNAc...) asparagine). 2 consecutive FAS1 domains span residues 463 to 604 and 606 to 744; these read PGDL…DQLD and PVDL…DKPI. The chain crosses the membrane as a helical span at residues 763-783; the sequence is VGFGVIIGVTIAISLLFCIII. Residues 784–862 lie on the Cytoplasmic side of the membrane; it reads TRGGKVKDKN…QKGGRSVSTS (79 aa).

The protein resides in the vacuole membrane. This is FAS1 domain-containing protein YLR001C from Saccharomyces cerevisiae (strain ATCC 204508 / S288c) (Baker's yeast).